Consider the following 272-residue polypeptide: Formamidopyrimidine-DNA glycosylase (272 aa).

Proline 2 serves as the catalytic Schiff-base intermediate with DNA. The Proton donor role is filled by glutamate 3. The Proton donor; for beta-elimination activity role is filled by lysine 58. Positions 92, 111, and 153 each coordinate DNA. The FPG-type zinc finger occupies asparagine 238–asparagine 272. Arginine 262 functions as the Proton donor; for delta-elimination activity in the catalytic mechanism.

It belongs to the FPG family. In terms of assembly, monomer. The cofactor is Zn(2+).

It catalyses the reaction Hydrolysis of DNA containing ring-opened 7-methylguanine residues, releasing 2,6-diamino-4-hydroxy-5-(N-methyl)formamidopyrimidine.. The enzyme catalyses 2'-deoxyribonucleotide-(2'-deoxyribose 5'-phosphate)-2'-deoxyribonucleotide-DNA = a 3'-end 2'-deoxyribonucleotide-(2,3-dehydro-2,3-deoxyribose 5'-phosphate)-DNA + a 5'-end 5'-phospho-2'-deoxyribonucleoside-DNA + H(+). Functionally, involved in base excision repair of DNA damaged by oxidation or by mutagenic agents. Acts as a DNA glycosylase that recognizes and removes damaged bases. Has a preference for oxidized purines, such as 7,8-dihydro-8-oxoguanine (8-oxoG). Has AP (apurinic/apyrimidinic) lyase activity and introduces nicks in the DNA strand. Cleaves the DNA backbone by beta-delta elimination to generate a single-strand break at the site of the removed base with both 3'- and 5'-phosphates. This Teredinibacter turnerae (strain ATCC 39867 / T7901) protein is Formamidopyrimidine-DNA glycosylase.